We begin with the raw amino-acid sequence, 644 residues long: MEAVVNSDVFLTSNAGLKSSYTNQTLSLVDEDHIHTSDKSLSCSVCNSLSQIVDDDFISAGARNQRTKPKRAGNNQSQQPIKKDCMVSIDEVASTHDWSTRLRNDGNAIAKYLTTNKYDTSNFTIQDMLNIMNKLNIVRTNRNELFQLLTHVKSTLNNASVSVKCTHPLVLIHSRASPRIGDQLKELDKIYSPSNHHILLSTTRFQSMHFTDMSSSQDLSFIYRKPETNYYIHPILMALFGIKLPALENAYVHGDTYSLIQQLYEFRKVKSYNYMLLVNRLTEDNPIVITGVSDLISTEIQRANMHTMIRKAIMNIRMGIFYCNDDDAVDPHLMKIIHTGCSQVMTDEEQILASILSIVGFRPTLVSVARPINGISYDMKLQAAPYIVVNPMKMITTSDSPISINSKDIYSMAFDGNSGRVVFAPPNIGYGRCSGVTHIDPLGTNVMGSAVHSPVIVNGAMMFYVERRQNKNMFGGECYTGFRSLIDDTPIDVSPEIMLNGIMYRLKSAVCYKLGDQFFDCGSSDIFLKGHYTILFTENGPWMYDPLSVFNPGARNARLMRALKNQYKKLSMDSDDGFYEWLNGDGSVFAASKQQMLMNHVANFDDDLLTMEEAMSMISRHCCILIYAQDYDQYISARHITELF.

Residues 1 to 61 (MEAVVNSDVF…IVDDDFISAG (61 aa)) constitute a propeptide that is removed on maturation.

The protein belongs to the orthopoxvirus OPG129 family. The 73-kDa precursor is cleaved to a mature protein of 60 kDa during virion maturation. Proteolytic cleavage of major core proteins OPG129, OPG136, and OPG098, which occurs at a late stage of core formation, is required for production of infectious mature virions (MV).

The protein localises to the virion. Functionally, major component of the virion core that undergoes proteolytic processing during the immature virion (IV) to mature virion (MV) transition. Essential for the formation of a structurally normal core. This chain is Major core protein OPG129 (OPG129), found in Homo sapiens (Human).